The primary structure comprises 83 residues: Cytochrome b559 subunit alpha (83 aa).

The chain crosses the membrane as a helical span at residues 21 to 35; sequence IIHTITVPMLFLAGW. His23 is a binding site for heme.

The protein belongs to the PsbE/PsbF family. In terms of assembly, heterodimer of an alpha subunit and a beta subunit. PSII is composed of 1 copy each of membrane proteins PsbA, PsbB, PsbC, PsbD, PsbE, PsbF, PsbH, PsbI, PsbJ, PsbK, PsbL, PsbM, PsbT, PsbX, PsbY, PsbZ, Psb30/Ycf12, peripheral proteins PsbO, CyanoQ (PsbQ), PsbU, PsbV and a large number of cofactors. It forms dimeric complexes. The cofactor is heme b.

Its subcellular location is the cellular thylakoid membrane. Functionally, this b-type cytochrome is tightly associated with the reaction center of photosystem II (PSII). PSII is a light-driven water:plastoquinone oxidoreductase that uses light energy to abstract electrons from H(2)O, generating O(2) and a proton gradient subsequently used for ATP formation. It consists of a core antenna complex that captures photons, and an electron transfer chain that converts photonic excitation into a charge separation. The sequence is that of Cytochrome b559 subunit alpha from Acaryochloris marina (strain MBIC 11017).